The following is a 405-amino-acid chain: Formate-dependent phosphoribosylglycinamide formyltransferase (405 aa).

Residues 22–23 (EL) and E82 each bind N(1)-(5-phospho-beta-D-ribosyl)glycinamide. Residues R115, K162, 167–172 (SSGKGQ), 202–205 (EGFI), and E210 each bind ATP. The ATP-grasp domain occupies 120 to 320 (RLAAETLGLP…EFELHARAIL (201 aa)). Residues E279 and E291 each contribute to the Mg(2+) site. N(1)-(5-phospho-beta-D-ribosyl)glycinamide-binding positions include D298, K367, and 374–375 (RR).

Belongs to the PurK/PurT family. In terms of assembly, homodimer.

It catalyses the reaction N(1)-(5-phospho-beta-D-ribosyl)glycinamide + formate + ATP = N(2)-formyl-N(1)-(5-phospho-beta-D-ribosyl)glycinamide + ADP + phosphate + H(+). It functions in the pathway purine metabolism; IMP biosynthesis via de novo pathway; N(2)-formyl-N(1)-(5-phospho-D-ribosyl)glycinamide from N(1)-(5-phospho-D-ribosyl)glycinamide (formate route): step 1/1. Involved in the de novo purine biosynthesis. Catalyzes the transfer of formate to 5-phospho-ribosyl-glycinamide (GAR), producing 5-phospho-ribosyl-N-formylglycinamide (FGAR). Formate is provided by PurU via hydrolysis of 10-formyl-tetrahydrofolate. The sequence is that of Formate-dependent phosphoribosylglycinamide formyltransferase from Leptothrix cholodnii (strain ATCC 51168 / LMG 8142 / SP-6) (Leptothrix discophora (strain SP-6)).